The following is a 183-amino-acid chain: Capsid protein (183 aa).

A disordered region spans residues 136–183 (NAPILSTLPETTVVRRRGRSPRRRTPSPRRRRSQSPRRRRSQSRESQC). Over residues 149-176 (VRRRGRSPRRRTPSPRRRRSQSPRRRRS) the composition is skewed to basic residues. A phosphoserine; by host mark is found at Ser155, Ser162, and Ser170. A 1; half-length repeat occupies 155–161 (SPRRRTP). The tract at residues 155–177 (SPRRRTPSPRRRRSQSPRRRRSQ) is 3 X 8 AA repeats of S-P-R-R-R-[PR]-S-Q. The short motif at 158–175 (RRTPSPRRRRSQSPRRRR) is the Bipartite nuclear localization signal element. 2 consecutive repeat copies span residues 162 to 169 (SPRRRRSQ) and 170 to 177 (SPRRRRSQ). The interval 177–183 (QSRESQC) is RNA binding.

Belongs to the orthohepadnavirus core antigen family. Homodimerizes, then multimerizes. Interacts with cytosol exposed regions of viral L glycoprotein present in the reticulum-to-Golgi compartment. Interacts with human FLNB. Phosphorylated form interacts with host importin alpha; this interaction depends on the exposure of the NLS, which itself depends upon genome maturation and/or phosphorylation of the capsid protein. Interacts with host NUP153. Phosphorylated by host SRPK1, SRPK2, and maybe protein kinase C or GAPDH. Phosphorylation is critical for pregenomic RNA packaging. Protein kinase C phosphorylation is stimulated by HBx protein and may play a role in transport of the viral genome to the nucleus at the late step during the viral replication cycle.

The protein resides in the virion. Its subcellular location is the host cytoplasm. Self assembles to form an icosahedral capsid. Most capsids appear to be large particles with an icosahedral symmetry of T=4 and consist of 240 copies of capsid protein, though a fraction forms smaller T=3 particles consisting of 180 capsid proteins. Entering capsids are transported along microtubules to the nucleus. Phosphorylation of the capsid is thought to induce exposure of nuclear localization signal in the C-terminal portion of the capsid protein that allows binding to the nuclear pore complex via the importin (karyopherin-) alpha and beta. Capsids are imported in intact form through the nuclear pore into the nuclear basket, where it probably binds NUP153. Only capsids that contain the mature viral genome can release the viral DNA and capsid protein into the nucleoplasm. Immature capsids get stuck in the basket. Capsids encapsulate the pre-genomic RNA and the P protein. Pre-genomic RNA is reverse-transcribed into DNA while the capsid is still in the cytoplasm. The capsid can then either be directed to the nucleus, providing more genomes for transcription, or bud through the endoplasmic reticulum to provide new virions. In Hepatitis B virus genotype D subtype ayw (isolate France/Tiollais/1979) (HBV-D), this protein is Capsid protein.